We begin with the raw amino-acid sequence, 217 residues long: Acyl-homoserine-lactone synthase (217 aa).

It belongs to the autoinducer synthase family.

The catalysed reaction is a fatty acyl-[ACP] + S-adenosyl-L-methionine = an N-acyl-L-homoserine lactone + S-methyl-5'-thioadenosine + holo-[ACP] + H(+). Required for the synthesis of OHHL (N-(3-oxohexanoyl)-L-homoserine lactone), an autoinducer molecule which binds to ExpR and thus acts in virulence (soft rot disease) through the activation of genes for plant tissue macerating enzymes. This is Acyl-homoserine-lactone synthase (expI) from Pectobacterium parmentieri.